The sequence spans 340 residues: Ketol-acid reductoisomerase (NADP(+)) (340 aa).

The KARI N-terminal Rossmann domain occupies 3–182; it reads VQMEYEKDVK…GAARVGLLET (180 aa). Residues 26-29, arginine 49, serine 53, and 83-86 each bind NADP(+); these read YGSQ and DEIQ. Histidine 108 is an active-site residue. Position 134 (glycine 134) interacts with NADP(+). The KARI C-terminal knotted domain maps to 183–328; the sequence is TYKEETEEDL…AELRKAMPFV (146 aa). The Mg(2+) site is built by aspartate 191, glutamate 195, glutamate 227, and glutamate 231. A substrate-binding site is contributed by serine 252.

It belongs to the ketol-acid reductoisomerase family. It depends on Mg(2+) as a cofactor.

The catalysed reaction is (2R)-2,3-dihydroxy-3-methylbutanoate + NADP(+) = (2S)-2-acetolactate + NADPH + H(+). The enzyme catalyses (2R,3R)-2,3-dihydroxy-3-methylpentanoate + NADP(+) = (S)-2-ethyl-2-hydroxy-3-oxobutanoate + NADPH + H(+). It participates in amino-acid biosynthesis; L-isoleucine biosynthesis; L-isoleucine from 2-oxobutanoate: step 2/4. It functions in the pathway amino-acid biosynthesis; L-valine biosynthesis; L-valine from pyruvate: step 2/4. Involved in the biosynthesis of branched-chain amino acids (BCAA). Catalyzes an alkyl-migration followed by a ketol-acid reduction of (S)-2-acetolactate (S2AL) to yield (R)-2,3-dihydroxy-isovalerate. In the isomerase reaction, S2AL is rearranged via a Mg-dependent methyl migration to produce 3-hydroxy-3-methyl-2-ketobutyrate (HMKB). In the reductase reaction, this 2-ketoacid undergoes a metal-dependent reduction by NADPH to yield (R)-2,3-dihydroxy-isovalerate. This Streptococcus pneumoniae (strain Hungary19A-6) protein is Ketol-acid reductoisomerase (NADP(+)).